Here is a 1690-residue protein sequence, read N- to C-terminus: DNA-directed RNA polymerase subunit beta' (1690 aa).

Residues C63, C65, C78, and C81 each contribute to the Zn(2+) site. Mg(2+) contacts are provided by D753, D755, and D757. Residues C1107, C1295, C1302, and C1305 each contribute to the Zn(2+) site.

Belongs to the RNA polymerase beta' chain family. As to quaternary structure, the RNAP catalytic core consists of 2 alpha, 1 beta, 1 beta' and 1 omega subunit. When a sigma factor is associated with the core the holoenzyme is formed, which can initiate transcription. Mg(2+) serves as cofactor. Zn(2+) is required as a cofactor.

The catalysed reaction is RNA(n) + a ribonucleoside 5'-triphosphate = RNA(n+1) + diphosphate. Its function is as follows. DNA-dependent RNA polymerase catalyzes the transcription of DNA into RNA using the four ribonucleoside triphosphates as substrates. The sequence is that of DNA-directed RNA polymerase subunit beta' from Thermotoga petrophila (strain ATCC BAA-488 / DSM 13995 / JCM 10881 / RKU-1).